We begin with the raw amino-acid sequence, 131 residues long: Phosphoribosyl-AMP cyclohydrolase (131 aa).

Aspartate 78 contacts Mg(2+). Cysteine 79 is a Zn(2+) binding site. Mg(2+) is bound by residues aspartate 80 and aspartate 82. Residues cysteine 96 and cysteine 103 each contribute to the Zn(2+) site.

This sequence belongs to the PRA-CH family. As to quaternary structure, homodimer. Requires Mg(2+) as cofactor. It depends on Zn(2+) as a cofactor.

The protein resides in the cytoplasm. It carries out the reaction 1-(5-phospho-beta-D-ribosyl)-5'-AMP + H2O = 1-(5-phospho-beta-D-ribosyl)-5-[(5-phospho-beta-D-ribosylamino)methylideneamino]imidazole-4-carboxamide. Its pathway is amino-acid biosynthesis; L-histidine biosynthesis; L-histidine from 5-phospho-alpha-D-ribose 1-diphosphate: step 3/9. Functionally, catalyzes the hydrolysis of the adenine ring of phosphoribosyl-AMP. This Neisseria meningitidis serogroup A / serotype 4A (strain DSM 15465 / Z2491) protein is Phosphoribosyl-AMP cyclohydrolase.